The sequence spans 83 residues: CLAVATA3/ESR (CLE)-related protein 20 (83 aa).

The first 29 residues, Met1–Ala29, serve as a signal peptide directing secretion.

The protein belongs to the CLV3/ESR signal peptide family. Mostly expressed in roots, seedlings, leaves, flowers, stems and apex, and, to a lower extent, in siliques and pollen.

Its subcellular location is the secreted. It is found in the extracellular space. Functionally, extracellular signal peptide that regulates cell fate. Represses root apical meristem maintenance. Inhibits irreversibly root growth by reducing cell division rates in the root apical meristem. Regulates the transition of protophloem cells from proliferation to differentiation, thus impinging on postembryonic growth capacity of the root meristem; this signaling pathway requires CRN and CLV2. In Arabidopsis thaliana (Mouse-ear cress), this protein is CLAVATA3/ESR (CLE)-related protein 20.